The primary structure comprises 296 residues: Thioredoxin-related transmembrane protein 2 (296 aa).

The N-terminal stretch at 1-48 (MAVLAPLIALVYSVPRLSRWLARPYYFLSALLSAAFLLVRKLPPVCES) is a signal peptide. Residues 49-102 (LPTQREDGNPCDFDWREVEILMFLSAIVMMKNRRSITVEQHVGNIFMFSKVANA) are Extracellular-facing. The chain crosses the membrane as a helical span at residues 103 to 125 (ILFFRLDIRMGLLYITLCIVFLM). At 126-296 (TCKPPLYMGP…VPDEESKKDK (171 aa)) the chain is on the cytoplasmic side. Residues 132-269 (YMGPEYIKYF…LYQRAKKLSK (138 aa)) form the Thioredoxin domain. Phosphoserine occurs at positions 211 and 243. Positions 272–296 (DKIPEEQPVAAVPAAVPDEESKKDK) are disordered. Positions 277–287 (EQPVAAVPAAV) are enriched in low complexity. Residues 293 to 296 (KKDK) carry the Di-lysine motif motif.

As to quaternary structure, monomer. Homodimer; disulfide-linked. Occurs in both reduced and oxidized monomeric form. Oxidative conditions increase homodimerization. Interacts with CANX. Interacts with ATP2A2.

The protein localises to the endoplasmic reticulum membrane. It is found in the mitochondrion membrane. Endoplasmic reticulum and mitochondria-associated protein that probably functions as a regulator of cellular redox state and thereby regulates protein post-translational modification, protein folding and mitochondrial activity. Indirectly regulates neuronal proliferation, migration, and organization in the developing brain. This chain is Thioredoxin-related transmembrane protein 2 (TMX2), found in Bos taurus (Bovine).